The primary structure comprises 128 residues: Phosphoribosyl-AMP cyclohydrolase (128 aa).

Aspartate 77 is a binding site for Mg(2+). Cysteine 78 provides a ligand contact to Zn(2+). Positions 79 and 81 each coordinate Mg(2+). Zn(2+)-binding residues include cysteine 95 and cysteine 102.

This sequence belongs to the PRA-CH family. In terms of assembly, homodimer. It depends on Mg(2+) as a cofactor. Zn(2+) serves as cofactor.

The protein resides in the cytoplasm. It catalyses the reaction 1-(5-phospho-beta-D-ribosyl)-5'-AMP + H2O = 1-(5-phospho-beta-D-ribosyl)-5-[(5-phospho-beta-D-ribosylamino)methylideneamino]imidazole-4-carboxamide. It participates in amino-acid biosynthesis; L-histidine biosynthesis; L-histidine from 5-phospho-alpha-D-ribose 1-diphosphate: step 3/9. Catalyzes the hydrolysis of the adenine ring of phosphoribosyl-AMP. In Methylococcus capsulatus (strain ATCC 33009 / NCIMB 11132 / Bath), this protein is Phosphoribosyl-AMP cyclohydrolase.